The following is a 104-amino-acid chain: Putative membrane protein insertion efficiency factor (104 aa).

The disordered stretch occupies residues serine 83 to serine 104.

Belongs to the UPF0161 family.

It localises to the cell inner membrane. Its function is as follows. Could be involved in insertion of integral membrane proteins into the membrane. The sequence is that of Putative membrane protein insertion efficiency factor from Chlamydia trachomatis serovar D (strain ATCC VR-885 / DSM 19411 / UW-3/Cx).